A 215-amino-acid chain; its full sequence is NAD(P)H-hydrate epimerase (215 aa).

One can recognise a YjeF N-terminal domain in the interval 8 to 212; the sequence is MYNIENKGHD…KIGIPPEAEE (205 aa). 57 to 61 serves as a coordination point for (6S)-NADPHX; it reads NNGGD. 2 residues coordinate K(+): asparagine 58 and aspartate 124. (6S)-NADPHX contacts are provided by residues 128–134, tyrosine 139, and aspartate 157; that span reads GTGISGE. Residue serine 160 coordinates K(+).

It belongs to the NnrE/AIBP family. K(+) serves as cofactor.

The catalysed reaction is (6R)-NADHX = (6S)-NADHX. It catalyses the reaction (6R)-NADPHX = (6S)-NADPHX. In terms of biological role, catalyzes the epimerization of the S- and R-forms of NAD(P)HX, a damaged form of NAD(P)H that is a result of enzymatic or heat-dependent hydration. This is a prerequisite for the S-specific NAD(P)H-hydrate dehydratase to allow the repair of both epimers of NAD(P)HX. This Nitrosopumilus maritimus (strain SCM1) protein is NAD(P)H-hydrate epimerase.